The chain runs to 598 residues: (+)-bornyl diphosphate synthase, chloroplastic (598 aa).

The N-terminal 54 residues, 1-54 (MSIISMNVSILSKPLNCLHNLERRPSKALLVPCTAPTARLRASCSSKLQEAHQI), are a transit peptide targeting the chloroplast. R314 contributes to the substrate binding site. Residues D351 and D355 each contribute to the Mg(2+) site. A DDXXD motif motif is present at residues 351 to 355 (DDIYD). R493 lines the substrate pocket. The Mg(2+) site is built by D496, T500, and E504. Position 500 (T500) interacts with substrate. K512 contacts substrate.

The protein belongs to the terpene synthase family. As to quaternary structure, homodimer. Mg(2+) serves as cofactor.

It is found in the plastid. The protein resides in the chloroplast. It carries out the reaction (2E)-geranyl diphosphate = (2S,4R)-bornyl diphosphate. It catalyses the reaction (2E)-geranyl diphosphate = (1R,4S)-camphene + diphosphate. The enzyme catalyses (2E)-geranyl diphosphate = (1R,5R)-alpha-pinene + diphosphate. It participates in terpene metabolism; (R)-camphor biosynthesis. Functionally, catalyzes the formation of the (+)-camphor precursor (+)-bornyl diphosphate from geranyl diphosphate. The enzyme also produces significant amounts of (+)-alpha-pinene, (+)-camphene, and (+-)-limonene. The chain is (+)-bornyl diphosphate synthase, chloroplastic from Salvia officinalis (Sage).